The sequence spans 977 residues: DNA-directed RNA polymerase 3A, chloroplastic (977 aa).

A chloroplast-targeting transit peptide spans M1–C72. Catalysis depends on residues D678, K753, and D910.

It belongs to the phage and mitochondrial RNA polymerase family.

Its subcellular location is the plastid. The protein resides in the chloroplast. It catalyses the reaction RNA(n) + a ribonucleoside 5'-triphosphate = RNA(n+1) + diphosphate. In terms of biological role, DNA-dependent RNA polymerase catalyzes the transcription of DNA into RNA using the four ribonucleoside triphosphates as substrates. This Nicotiana tabacum (Common tobacco) protein is DNA-directed RNA polymerase 3A, chloroplastic (RPOT3-SYL).